Consider the following 229-residue polypeptide: Ribose-5-phosphate isomerase A (229 aa).

Substrate contacts are provided by residues 28-31 (TGST), 85-88 (DGAD), and 98-101 (KGRG). Residue Glu107 is the Proton acceptor of the active site. Lys125 is a binding site for substrate.

Belongs to the ribose 5-phosphate isomerase family. In terms of assembly, homodimer.

It catalyses the reaction aldehydo-D-ribose 5-phosphate = D-ribulose 5-phosphate. It participates in carbohydrate degradation; pentose phosphate pathway; D-ribose 5-phosphate from D-ribulose 5-phosphate (non-oxidative stage): step 1/1. Its function is as follows. Catalyzes the reversible conversion of ribose-5-phosphate to ribulose 5-phosphate. The polypeptide is Ribose-5-phosphate isomerase A (Thermococcus kodakarensis (strain ATCC BAA-918 / JCM 12380 / KOD1) (Pyrococcus kodakaraensis (strain KOD1))).